The chain runs to 141 residues: Large ribosomal subunit protein uL11 (141 aa).

This sequence belongs to the universal ribosomal protein uL11 family. In terms of assembly, part of the ribosomal stalk of the 50S ribosomal subunit. Interacts with L10 and the large rRNA to form the base of the stalk. L10 forms an elongated spine to which L12 dimers bind in a sequential fashion forming a multimeric L10(L12)X complex. Post-translationally, one or more lysine residues are methylated.

Forms part of the ribosomal stalk which helps the ribosome interact with GTP-bound translation factors. The protein is Large ribosomal subunit protein uL11 of Agathobacter rectalis (strain ATCC 33656 / DSM 3377 / JCM 17463 / KCTC 5835 / VPI 0990) (Eubacterium rectale).